The chain runs to 332 residues: Putative peptide import ATP-binding protein BruAb2_1033 (332 aa).

The ABC transporter domain occupies 11-261; sequence LEVSNLSVDF…PLHPYTEGLL (251 aa). 47–54 contributes to the ATP binding site; sequence GESGSGKS.

The protein belongs to the ABC transporter superfamily. In terms of assembly, the complex is composed of two ATP-binding proteins (BruAb2_1033 and BruAb2_1034), two transmembrane proteins (BruAb2_1031 and BruAb2_1032) and a solute-binding protein (BruAb2_1030).

The protein localises to the cell inner membrane. Its function is as follows. Probably part of an ABC transporter complex that could be involved in peptide import. Probably responsible for energy coupling to the transport system. This chain is Putative peptide import ATP-binding protein BruAb2_1033, found in Brucella abortus biovar 1 (strain 9-941).